The following is a 558-amino-acid chain: Factor VII-activating protease (558 aa).

The N-terminal stretch at methionine 1–glycine 23 is a signal peptide. A glycan (N-linked (GlcNAc...) asparagine) is linked at asparagine 54. EGF-like domains are found at residues glutamate 71 to glutamine 107, valine 109 to serine 146, and valine 148 to glutamate 186. 18 disulfides stabilise this stretch: cysteine 75–cysteine 86, cysteine 80–cysteine 95, cysteine 97–cysteine 106, cysteine 113–cysteine 123, cysteine 118–cysteine 134, cysteine 136–cysteine 145, cysteine 152–cysteine 163, cysteine 157–cysteine 174, cysteine 176–cysteine 185, cysteine 192–cysteine 274, cysteine 213–cysteine 255, cysteine 244–cysteine 269, cysteine 299–cysteine 433, cysteine 345–cysteine 361, cysteine 353–cysteine 422, cysteine 445–cysteine 513, cysteine 475–cysteine 491, and cysteine 503–cysteine 531. Residues aspartate 191–cysteine 274 form the Kringle domain. The Peptidase S1 domain maps to isoleucine 312 to glutamate 553. Residues histidine 360 and aspartate 409 each act as charge relay system in the active site. Serine 507 acts as the Charge relay system in catalysis.

The protein belongs to the peptidase S1 family. As to quaternary structure, heterodimer; disulfide-linked. Heterodimer of a 50 kDa heavy and a 27 kDa light chain linked by a disulfide bond. Post-translationally, proteolytic cleavage at Gly-23 or Leu-27 can give rise to the 50 kDa heavy chain (HC) and cleavage at Arg-311 or Lys-317 can give rise to the 27 kDa light chain (LC). The HC can undergo further proteolytic cleavage giving rise to a 26 kDa fragment. The LC can undergo further proteolytic cleavage at Arg-311 leading to a 17-kDa fragment and at Arg-478 leading to a 8-kDa fragment.

The protein resides in the secreted. Its function is as follows. Cleaves the alpha-chain at multiple sites and the beta-chain between 'Lys-53' and 'Lys-54' but not the gamma-chain of fibrinogen and therefore does not initiate the formation of the fibrin clot and does not cause the fibrinolysis directly. It does not cleave (activate) prothrombin and plasminogen but converts the inactive single chain urinary plasminogen activator (pro-urokinase) to the active two chain form. Activates coagulation factor VII. May function as a tumor suppressor negatively regulating cell proliferation and cell migration. The protein is Factor VII-activating protease (HABP2) of Bos taurus (Bovine).